Here is a 330-residue protein sequence, read N- to C-terminus: Aspartate--ammonia ligase (330 aa).

This sequence belongs to the class-II aminoacyl-tRNA synthetase family. AsnA subfamily.

The protein localises to the cytoplasm. It catalyses the reaction L-aspartate + NH4(+) + ATP = L-asparagine + AMP + diphosphate + H(+). It functions in the pathway amino-acid biosynthesis; L-asparagine biosynthesis; L-asparagine from L-aspartate (ammonia route): step 1/1. The chain is Aspartate--ammonia ligase from Streptococcus equi subsp. equi (strain 4047).